The following is a 503-amino-acid chain: UDP-N-acetylmuramoylalanine--D-glutamate ligase (503 aa).

129–135 (GTNGKTT) lines the ATP pocket. Positions 284-305 (DSEAEGEGKPRRRKADATAQEA) are disordered.

Belongs to the MurCDEF family.

It is found in the cytoplasm. It catalyses the reaction UDP-N-acetyl-alpha-D-muramoyl-L-alanine + D-glutamate + ATP = UDP-N-acetyl-alpha-D-muramoyl-L-alanyl-D-glutamate + ADP + phosphate + H(+). It participates in cell wall biogenesis; peptidoglycan biosynthesis. In terms of biological role, cell wall formation. Catalyzes the addition of glutamate to the nucleotide precursor UDP-N-acetylmuramoyl-L-alanine (UMA). The polypeptide is UDP-N-acetylmuramoylalanine--D-glutamate ligase (Cupriavidus pinatubonensis (strain JMP 134 / LMG 1197) (Cupriavidus necator (strain JMP 134))).